The following is a 363-amino-acid chain: 24-methylenesterol C-methyltransferase 2 (363 aa).

Residues 6 to 26 form a helical membrane-spanning segment; sequence MAWTAAGVGMALVYWFVWVMG.

This sequence belongs to the class I-like SAM-binding methyltransferase superfamily. Erg6/SMT family.

The protein localises to the membrane. The catalysed reaction is 24-methylidenelophenol + S-adenosyl-L-methionine = (Z)-24-ethylidenelophenol + S-adenosyl-L-homocysteine + H(+). Its pathway is steroid biosynthesis; sterol biosynthesis. Functionally, catalyzes the methyl transfer from S-adenosyl-methionine to the methylene group of 24-methylene lophenol to form 24-ethylidene lophenol. This is 24-methylenesterol C-methyltransferase 2 (Smt2-1) from Oryza sativa subsp. japonica (Rice).